The chain runs to 618 residues: Nuclear cap-binding protein subunit 3 (618 aa).

A disordered region spans residues 1–53 (MAAVRGLRVSVKAGGGAEPEPMEVEEGEVEAAAGRTSPVEATADQTSPREVVP). The span at 20-29 (EPMEVEEGEV) shows a compositional bias: acidic residues. The interval 117-178 (ETLYICGVDE…LSSKPTNEKG (62 aa)) is RNA recognition motif (RRM) domain. Positions 146-149 (WLDD) match the WLDD motif; essential for 7-methylguanosine-containing mRNA cap binding motif. 3 disordered regions span residues 170-250 (SSKP…DLRP), 342-366 (PEEPIEEEEEEEEEEEEDMDEDDRV), and 426-618 (QLKT…DTDS). The segment covering 174 to 188 (TNEKGQRKKDGEHRS) has biased composition (basic and acidic residues). Acidic residues predominate over residues 205-223 (DETEEGEVEEDNPNDAEVE). The segment covering 231-240 (PPETLSQAEQ) has biased composition (polar residues). Over residues 344–365 (EPIEEEEEEEEEEEEDMDEDDR) the composition is skewed to acidic residues. The segment covering 436 to 450 (SDSAGNSVKSRIGSK) has biased composition (polar residues). A compositionally biased stretch (basic and acidic residues) spans 451-468 (SHSEKPADVRLILEEKRQ). Low complexity predominate over residues 469–481 (STASRQQSSSSGK). 3 stretches are compositionally biased toward basic and acidic residues: residues 507-517 (SRREPLSDVHS), 550-562 (PKEKDRASEKSGE), and 583-596 (IKEKEQIRQKKSRL). Positions 609-618 (ESSSGSDTDS) are enriched in low complexity.

The protein belongs to the NCBP3 family. As to quaternary structure, component of an alternative cap-binding complex (CBC) composed of NCBP1/CBP80 and NCBP3.

The protein resides in the nucleus. It localises to the cytoplasm. In terms of biological role, associates with NCBP1/CBP80 to form an alternative cap-binding complex (CBC) which plays a key role in mRNA export. NCBP3 serves as adapter protein linking the capped RNAs (m7GpppG-capped RNA) to NCBP1/CBP80. Unlike the conventional CBC with NCBP2 which binds both small nuclear RNA (snRNA) and messenger (mRNA) and is involved in their export from the nucleus, the alternative CBC with NCBP3 does not bind snRNA and associates only with mRNA thereby playing a role in only mRNA export. In Xenopus laevis (African clawed frog), this protein is Nuclear cap-binding protein subunit 3.